The primary structure comprises 258 residues: Acetylglutamate kinase (258 aa).

Residues 44–45 (GG), arginine 66, and asparagine 158 contribute to the substrate site. ATP contacts are provided by residues 181–186 (DVSGIL) and 209–211 (IIT).

This sequence belongs to the acetylglutamate kinase family. ArgB subfamily. Homodimer.

It localises to the cytoplasm. It carries out the reaction N-acetyl-L-glutamate + ATP = N-acetyl-L-glutamyl 5-phosphate + ADP. Its pathway is amino-acid biosynthesis; L-arginine biosynthesis; N(2)-acetyl-L-ornithine from L-glutamate: step 2/4. In terms of biological role, catalyzes the ATP-dependent phosphorylation of N-acetyl-L-glutamate. The protein is Acetylglutamate kinase of Shigella dysenteriae serotype 1 (strain Sd197).